The primary structure comprises 1220 residues: Post-transcriptional regulator MKT1L (1220 aa).

A disordered region spans residues 1–107 (MRKAGANRNN…SPWNSPPQQT (107 aa)). Residues 34 to 70 (PHHHQHQHHHQHQHQHQHQHQHPHQHPHQHHHHHPHH) show a composition bias toward basic residues.

This sequence belongs to the XPG/RAD2 endonuclease family. In terms of assembly, forms a complex composed of at least MKT1L, PBP1, XAC1 and LSM12.

Its subcellular location is the cytoplasm. Functionally, involved in post-transcriptional regulation of gene expression. The sequence is that of Post-transcriptional regulator MKT1L from Trypanosoma brucei brucei (strain 927/4 GUTat10.1).